A 1491-amino-acid chain; its full sequence is MSKVIQKKNHWTSRVHECTVKRGPQGELGVTVLGGAEHGEFPYVGAVAAVEAAGLPGGGEGPRLGEGELLLEVQGVRVSGLPRYDVLGVIDSCKEAVTFKAVRQGGRLNKDLRHFLNQRFQKGSPDHELQQTIRDNLYRHAVPCTTRSPREGEVPGVDYNFLTVKEFLDLEQSGTLLEVGTYEGNYYGTPKPPSQPVSGKVITTDALHSLQSGSKQSTPKRTKSYNDMQNAGIVHAENEEEDDVPEMNSSFTADSGEQEEHTLQETALPPVNSSIIAAPITDPSQKFPQYLPLSAEDNLGPLPENWEMAYTENGEVYFIDHNTKTTSWLDPRCLNKQQKPLEECEDDEGVHTEELDSELELPAGWEKIEDPVYGIYYVDHINRKTQYENPVLEAKRKKQLEQQQQQQQQQQQQQQQQQQQQTEEWTEDHSALVPPVIPNHPPSNPEPAREVPLQGKPFFTRNPSELKGKFIHTKLRKSSRGFGFTVVGGDEPDEFLQIKSLVLDGPAALDGKMETGDVIVSVNDTCVLGHTHAQVVKIFQSIPIGASVDLELCRGYPLPFDPDDPNTSLVTSVAILDKEPIIVNGQETYDSPASHSSKTGKVNGMKDARPSSPADVASNSSHGYPNDTVSLASSIATQPELITVHIVKGPMGFGFTIADSPGGGGQRVKQIVDSPRCRGLKEGDLIVEVNKKNVQALTHNQVVDMLVECPKGSEVTLLVQRGGLPVPKKSPKSQPLERKDSQNSSQHSVSSHRSLHTASPSHSTQVLPEFPPAEAQAPDQTDSSGQKKPDPFKIWAQSRSMYENRPMSPSPASGLSKGEREREINSTNFGECPIPDYQEQDIFLWRKETGFGFRILGGNEPGEPIYIGHIVPLGAADTDGRLRSGDELICVDGTPVIGKSHQLVVQLMQQAAKQGHVNLTVRRKVVFAVPKTENEVPSPASSHHSSNQPASLTEEKRTPQGSQNSLNTVSSGSGSTSGIGSGGGGGSGVVSTVVQPYDVEIRRGENEGFGFVIVSSVSRPEAGTTFAGNACVAMPHKIGRIIEGSPADRCGKLKVGDRILAVNGCSITNKSHSDIVNLIKEAGNTVTLRIIPGDESSNATLLTNAEKIATITTTHTPSQQGTQETRNTTKPKQESQFEFKAPQATQEQDFYTVELERGAKGFGFSLRGGREYNMDLYVLRLAEDGPAERCGKMRIGDEILEINGETTKNMKHSRAIELIKNGGRRVRLFLKRGDGSVPEYDPSSDRHGPATGPQGVPEVRAGPDRRQHPSLESSYPPDLHKSSPHGEKRAHARDPKGSREYSRQPNEHHTWNGTSRKPDSGACRPKDRAPEGRRDAQAERAAAANGPKRRSPEKRREGTRSADNTLERREKHEKRRDVSPERRRERSPTRRRDGSPSRRRRSLERLLEQRRSPERRRGGSPERRAKSTDRRRARSPERRRERSLDKRNREDRASHREREEANLKQDAGRSSRHPPEQRRRPYKECSTDLSI.

Residues 17–105 (ECTVKRGPQG…AVTFKAVRQG (89 aa)) enclose the PDZ 1 domain. A Guanylate kinase-like domain is found at 96–287 (AVTFKAVRQG…APITDPSQKF (192 aa)). Position 103-110 (103-110 (RQGGRLNK)) interacts with ATP. The disordered stretch occupies residues 236–267 (AENEEEDDVPEMNSSFTADSGEQEEHTLQETA). Residues 300-333 (GPLPENWEMAYTENGEVYFIDHNTKTTSWLDPRC) form the WW 1 domain. Ser-357 bears the Phosphoserine mark. Residues 359 to 392 (LELPAGWEKIEDPVYGIYYVDHINRKTQYENPVL) enclose the WW 2 domain. Over residues 411–421 (QQQQQQQQQQQ) the composition is skewed to low complexity. The segment at 411–462 (QQQQQQQQQQQTEEWTEDHSALVPPVIPNHPPSNPEPAREVPLQGKPFFTRN) is disordered. Pro residues predominate over residues 435 to 445 (PVIPNHPPSNP). Positions 472-554 (HTKLRKSSRG…GASVDLELCR (83 aa)) constitute a PDZ 2 domain. The span at 586 to 600 (QETYDSPASHSSKTG) shows a compositional bias: polar residues. 3 disordered regions span residues 586–623 (QETYDSPASHSSKTGKVNGMKDARPSSPADVASNSSHG), 720–832 (QRGG…FGEC), and 932–987 (TENE…GGGS). The 79-residue stretch at 643–721 (TVHIVKGPMG…GSEVTLLVQR (79 aa)) folds into the PDZ 3 domain. 2 positions are modified to phosphoserine: Ser-730 and Ser-741. The segment covering 742 to 752 (QNSSQHSVSSH) has biased composition (low complexity). Polar residues predominate over residues 756-766 (HTASPSHSTQV). Position 800 is a phosphoserine (Ser-800). Positions 813–895 (SGLSKGERER…DELICVDGTP (83 aa)) constitute a PDZ 4 domain. Polar residues predominate over residues 939-951 (PASSHHSSNQPAS). One can recognise a PDZ 5 domain in the interval 970 to 1066 (SSGSGSTSGI…DRILAVNGCS (97 aa)). The tract at residues 970-1066 (SSGSGSTSGI…DRILAVNGCS (97 aa)) is interaction with FCHSD2. The span at 975 to 987 (STSGIGSGGGGGS) shows a compositional bias: gly residues. The residue at position 1071 (Ser-1071) is a Phosphoserine. Residues 1112-1130 (TTTHTPSQQGTQETRNTTK) show a composition bias toward polar residues. Disordered regions lie at residues 1112-1143 (TTTHTPSQQGTQETRNTTKPKQESQFEFKAPQ) and 1234-1491 (DGSV…DLSI). One can recognise a PDZ 6 domain in the interval 1124 to 1206 (ETRNTTKPKQ…DEILEINGET (83 aa)). 3 stretches are compositionally biased toward basic and acidic residues: residues 1278 to 1338 (DLHK…DAQA), 1354 to 1396 (KRRE…DGSP), and 1403 to 1491 (LERL…DLSI). 2 positions are modified to phosphoserine: Ser-1361 and Ser-1412.

In terms of assembly, part of a complex composed of AMOTL2, MAGI1 and CDH5, within the complex AMOTL2 acts as a scaffold protein for the interaction of MAGI1 with CDH5. The complex is required for coupling actin fibers to cell junctions in endothelial cells. Interacts through its WW 2 domain with SYNPO and through its PDZ 5 domain with ACTN4. Interacts with cytoplasmic domain of ADGRB1. Interacts via its WW domains with DRPLA. Interacts with ESAM, LRP2 and CXADR. May interact with CTNNB1. Interacts through its PDZ 1 domain with NET1. Interacts with ASIC3 and AMOT. Interacts with FCHSD2. Interacts with IGSF5/JAM4 and through its PDZ 2 and 3 domains with NPHS1 forming a tripartite complex. Interacts with DDN. Interacts with DLL1. Interacts with KCNJ10 and possibly with KCNJ10/KCNJ16 heterodimer; this interaction may facilitate KCNJ10/KCNJ16 potassium channel expression at the basolateral membrane in kidney tubular cells. Interacts with PRRG4 (via cytoplasmic domain). As to quaternary structure, interacts (via PDZ domain) with RAPGEF2. As to expression, widely expressed with the exception of skeletal muscle. Isoform 1, isoform 2 and isoform 6 are highly expressed in colon, kidney, lung, liver, and pancreas. Isoform 5 is predominantly expressed in brain and heart. Isoform 3 and isoform 4 are highly expressed in pancreas and brain.

The protein localises to the cell junction. It is found in the tight junction. It localises to the cell membrane. Plays a role in coupling actin fibers to cell junctions in endothelial cells, via its interaction with AMOTL2 and CDH5. May regulate acid-induced ASIC3 currents by modulating its expression at the cell surface. This chain is Membrane-associated guanylate kinase, WW and PDZ domain-containing protein 1 (MAGI1), found in Homo sapiens (Human).